The following is a 519-amino-acid chain: Xylose import ATP-binding protein XylG (519 aa).

2 consecutive ABC transporter domains span residues 6–245 (MTMR…VGRE) and 262–507 (FEAR…IRPV). 38 to 45 (GENGAGKS) contacts ATP.

It belongs to the ABC transporter superfamily. Xylose importer (TC 3.A.1.2.4) family. In terms of assembly, the complex is composed of two ATP-binding proteins (XylG), two transmembrane proteins (XylH) and a solute-binding protein (XylF).

Its subcellular location is the cell inner membrane. The catalysed reaction is D-xylose(out) + ATP + H2O = D-xylose(in) + ADP + phosphate + H(+). Part of the ABC transporter complex XylFGH involved in xylose import. Responsible for energy coupling to the transport system. This chain is Xylose import ATP-binding protein XylG, found in Paraburkholderia xenovorans (strain LB400).